A 320-amino-acid polypeptide reads, in one-letter code: Cytochrome f (320 aa).

Residues 1 to 35 (MQTRNAFSWIKKEITRSISVLLMIYIITRAPISNA) form the signal peptide. Positions 36, 56, 59, and 60 each coordinate heme. Residues 286-305 (VQGLLLFLASIILAQILLVL) form a helical membrane-spanning segment.

It belongs to the cytochrome f family. As to quaternary structure, the 4 large subunits of the cytochrome b6-f complex are cytochrome b6, subunit IV (17 kDa polypeptide, petD), cytochrome f and the Rieske protein, while the 4 small subunits are PetG, PetL, PetM and PetN. The complex functions as a dimer. Heme is required as a cofactor.

The protein resides in the plastid. It is found in the chloroplast thylakoid membrane. Functionally, component of the cytochrome b6-f complex, which mediates electron transfer between photosystem II (PSII) and photosystem I (PSI), cyclic electron flow around PSI, and state transitions. The sequence is that of Cytochrome f (petA) from Pisum sativum (Garden pea).